Consider the following 152-residue polypeptide: Cyanate hydratase (152 aa).

Residues Arg98, Glu101, and Ser124 contribute to the active site.

It belongs to the cyanase family.

It carries out the reaction cyanate + hydrogencarbonate + 3 H(+) = NH4(+) + 2 CO2. Catalyzes the reaction of cyanate with bicarbonate to produce ammonia and carbon dioxide. This chain is Cyanate hydratase, found in Uncinocarpus reesii (strain UAMH 1704).